Here is a 70-residue protein sequence, read N- to C-terminus: Venom antimicrobial peptide-6 (70 aa).

A signal peptide spans 1–23; that stretch reads MKSQTFFLLFLVVFLLAITQSEA. Phenylalanine 36 bears the Phenylalanine amide mark. The propeptide occupies 40–70; that stretch reads SLRDMDTMKYLYDPSLSAADLKTLQKLMENY.

The protein belongs to the non-disulfide-bridged peptide (NDBP) superfamily. Short antimicrobial peptide (group 4) family. In terms of tissue distribution, expressed by the venom gland.

Its subcellular location is the secreted. The protein localises to the target cell membrane. Functionally, amphipathic peptide that exhibits extensive cytolytic activities against both prokaryotic and eukaryotic cells. Is more potent against Gram-positive bacteria (lethal concentration (LC)=0.25-2.9 uM) than against Gram-negative bacteria (LC=6.2-&gt;50 uM), and fungi ((LC)=14.1-&gt;50 uM). Shows hemolytic activity against rabbit erythrocytes (37.7% of inhibition at 6.25 uM) and cytolysis against rat dorsal root ganglions. In vivo, intravenous injection into mice tail provokes uncomfortable symptoms with a death rate of 12.5%. This chain is Venom antimicrobial peptide-6, found in Mesobuthus eupeus (Lesser Asian scorpion).